The primary structure comprises 289 residues: 5'-3' exonuclease (289 aa).

The region spanning 166–256 (VEPQKIPDYL…EEDLKIKRPD (91 aa)) is the 5'-3' exonuclease domain.

In terms of biological role, 5'-3' exonuclease acting preferentially on double-stranded DNA. This Aquifex aeolicus (strain VF5) protein is 5'-3' exonuclease.